The primary structure comprises 477 residues: Lactate utilization protein B (477 aa).

2 consecutive 4Fe-4S ferredoxin-type domains span residues 304 to 334 and 353 to 382; these read GTQFQSILQCIRCAACVNVCPVYRQTGGHSY and YDTYKELPYASTLCGACTEACPVKIPLHDL. [4Fe-4S] cluster-binding residues include cysteine 313, cysteine 316, cysteine 319, cysteine 323, cysteine 366, cysteine 369, and cysteine 373. The segment at 443–463 is disordered; sequence GPKPLQAWTNSRDFPMPDDEN.

Belongs to the LutB/YkgF family.

Its function is as follows. Is involved in L-lactate degradation and allows cells to grow with lactate as the sole carbon source. Has probably a role as an electron transporter during oxidation of L-lactate. In Macrococcus caseolyticus (strain JCSC5402) (Macrococcoides caseolyticum), this protein is Lactate utilization protein B.